The sequence spans 237 residues: Uridylate kinase (237 aa).

11–14 contacts ATP; sequence KLSG. Glycine 53 serves as a coordination point for UMP. Residues glycine 54 and arginine 58 each coordinate ATP. Residues aspartate 73 and 134-141 each bind UMP; that span reads TGNPFFTT. ATP contacts are provided by threonine 161, tyrosine 167, and aspartate 170.

The protein belongs to the UMP kinase family. In terms of assembly, homohexamer.

It localises to the cytoplasm. It catalyses the reaction UMP + ATP = UDP + ADP. It participates in pyrimidine metabolism; CTP biosynthesis via de novo pathway; UDP from UMP (UMPK route): step 1/1. Its activity is regulated as follows. Inhibited by UTP. Catalyzes the reversible phosphorylation of UMP to UDP. The chain is Uridylate kinase from Burkholderia mallei (strain NCTC 10247).